A 364-amino-acid polypeptide reads, in one-letter code: RNA-binding protein ZC3H11 (364 aa).

The segment at 64 to 92 adopts a C3H1-type zinc-finger fold; that stretch reads RYKTKLCKNFVQYGTCPYDIRCMFAHGEE. The MKT1-binding motif signature appears at 194 to 199; that stretch reads VRHNPY. The disordered stretch occupies residues 340–364; it reads EQSQSHLKREGNEGRGEGLHMFLSL. Over residues 346-357 the composition is skewed to basic and acidic residues; it reads LKREGNEGRGEG.

As to quaternary structure, interacts (via MKT1-binding motif) with MKT1. Interacts with PBP1 (via C-terminus); the interaction is direct. Phosphorylated at the N-terminus. CK1.2-dependent phosphorylation may lead to proteasome-dependent degradation of ZC3H11 in absence of stress.

The protein resides in the cytoplasm. Its function is as follows. RNA-binding protein involved in regulation of mRNA stability. Binds AU-rich regions in the 3'-UTR of mRNAs and promotes their stabilization by recruiting a MKT1-containing complex. Stabilizes chaperone mRNAs during stress that causes an accumulation of misfolded or unfolded proteins in the cytoplasm. This chain is RNA-binding protein ZC3H11, found in Trypanosoma brucei brucei (strain 927/4 GUTat10.1).